Consider the following 662-residue polypeptide: UvrABC system protein B (662 aa).

The Helicase ATP-binding domain occupies 25-411 (DGIIAGDKFQ…STRIVEQVIR (387 aa)). Residue 38-45 (GVTGSGKT) participates in ATP binding. Residues 91–114 (YYDYYQPEAYVPARDLYIEKDASI) carry the Beta-hairpin motif. The Helicase C-terminal domain occupies 428 to 594 (QMEHIYGEVK…TIKKAIEDIL (167 aa)). Residues 625–660 (KKLIKKLEAQMAEYADMLMFEEAAVIRDKIEEVKRI) form the UVR domain.

This sequence belongs to the UvrB family. Forms a heterotetramer with UvrA during the search for lesions. Interacts with UvrC in an incision complex.

The protein localises to the cytoplasm. Its function is as follows. The UvrABC repair system catalyzes the recognition and processing of DNA lesions. A damage recognition complex composed of 2 UvrA and 2 UvrB subunits scans DNA for abnormalities. Upon binding of the UvrA(2)B(2) complex to a putative damaged site, the DNA wraps around one UvrB monomer. DNA wrap is dependent on ATP binding by UvrB and probably causes local melting of the DNA helix, facilitating insertion of UvrB beta-hairpin between the DNA strands. Then UvrB probes one DNA strand for the presence of a lesion. If a lesion is found the UvrA subunits dissociate and the UvrB-DNA preincision complex is formed. This complex is subsequently bound by UvrC and the second UvrB is released. If no lesion is found, the DNA wraps around the other UvrB subunit that will check the other stand for damage. The protein is UvrABC system protein B of Treponema denticola (strain ATCC 35405 / DSM 14222 / CIP 103919 / JCM 8153 / KCTC 15104).